The primary structure comprises 41 residues: U-megalopygitoxin(11)-Mo28 (41 aa).

The signal sequence occupies residues 1–29 (MRTTLLLLIIAITVMVFVSEAYAAPAPEP).

This sequence belongs to the caterpillar 11 family. Expressed by the venom apparatus.

It is found in the secreted. In terms of biological role, probable toxin. The chain is U-megalopygitoxin(11)-Mo28 from Megalopyge opercularis (Southern flannel moth).